The sequence spans 255 residues: MNTARLNQGTPLLLNAVSKHYAENIVLNQLDLHIPAGQFVAVVGRSGGGKSTLLRLLAGLETPTAGDVLAGTTPLAEIQEDTRMMFQDARLLPWKSVIDNVGLGLKGQWRDAARRALAAVGLENRAGEWPAALSGGQKQRVALARALIHRPGLLLLDEPLGALDALTRLEMQDLIVSLWQQHGFTVLLVTHDVSEAVAMADRVLLIEEGKIGLDLTVDIPRPRRLGSVRLAELEAEVLQRVMRRGHSEQLIRRHG.

The ABC transporter domain maps to 12-233 (LLLNAVSKHY…RLGSVRLAEL (222 aa)). 44-51 (GRSGGGKS) is a binding site for ATP.

It belongs to the ABC transporter superfamily. Aliphatic sulfonates importer (TC 3.A.1.17.2) family. In terms of assembly, the complex is composed of two ATP-binding proteins (SsuB), two transmembrane proteins (SsuC) and a solute-binding protein (SsuA).

Its subcellular location is the cell inner membrane. The catalysed reaction is ATP + H2O + aliphatic sulfonate-[sulfonate-binding protein]Side 1 = ADP + phosphate + aliphatic sulfonateSide 2 + [sulfonate-binding protein]Side 1.. Functionally, part of the ABC transporter complex SsuABC involved in aliphatic sulfonates import. Responsible for energy coupling to the transport system. The chain is Aliphatic sulfonates import ATP-binding protein SsuB from Shigella sonnei (strain Ss046).